Consider the following 336-residue polypeptide: F420-dependent glucose-6-phosphate dehydrogenase (336 aa).

Residue Asp-39 participates in coenzyme F420-(gamma-Glu)n binding. His-40 functions as the Proton donor in the catalytic mechanism. Residues Thr-76 and 107–108 each bind coenzyme F420-(gamma-Glu)n; that span reads TG. Catalysis depends on Glu-109, which acts as the Proton acceptor. Coenzyme F420-(gamma-Glu)n contacts are provided by residues Asn-112, 177-178, and 180-181; these read GG and AV. Residues Thr-195, Lys-198, Lys-259, and Arg-283 each coordinate substrate.

It belongs to the F420-dependent glucose-6-phosphate dehydrogenase family. Homodimer.

The catalysed reaction is oxidized coenzyme F420-(gamma-L-Glu)(n) + D-glucose 6-phosphate + H(+) = 6-phospho-D-glucono-1,5-lactone + reduced coenzyme F420-(gamma-L-Glu)(n). Functionally, catalyzes the coenzyme F420-dependent oxidation of glucose 6-phosphate (G6P) to 6-phosphogluconolactone. Appears to have a role in resistance to oxidative stress, via its consumption of G6P that serves as a source of reducing power to combat oxidative stress in mycobacteria. More precisely, is likely involved in a F420-dependent anti-oxidant mechanism that protects M.tuberculosis against oxidative stress and bactericidal agents. In terms of biological role, is essential for the bioreductive activation of the bicyclic 4-nitroimidazole prodrug PA-824 (nitroimidazo-oxazine) developed for anti-tuberculosis therapy against both replicating and persistent bacteria. It does not interact directly with PA-824 but, rather, provides reduced F420 to the deazaflavin-dependent nitroreductase Ddn, which in turn activates PA-824. In Mycobacterium tuberculosis (strain CDC 1551 / Oshkosh), this protein is F420-dependent glucose-6-phosphate dehydrogenase (fgd1).